The primary structure comprises 205 residues: Polyamine-modulated factor 1 (205 aa).

The interval M1–T30 is disordered. The stretch at F141–E193 forms a coiled coil.

In terms of assembly, component of the MIS12 complex composed of MIS12, DSN1, NSL1 and PMF1. Interacts with COPS7A. Interacts via its coiled-coil domain with the leucine-zipper domain of NFE2L2. The interaction with NFE2L2 is required for the transcriptional regulation of SSAT. As to expression, highest levels of expression in heart and skeletal muscle, with significant levels expressed in kidney and liver.

It localises to the nucleus. The protein resides in the chromosome. Its subcellular location is the centromere. The protein localises to the kinetochore. In terms of biological role, part of the MIS12 complex which is required for normal chromosome alignment and segregation and kinetochore formation during mitosis. May act as a cotranscription partner of NFE2L2 involved in regulation of polyamine-induced transcription of SSAT. In Homo sapiens (Human), this protein is Polyamine-modulated factor 1.